The following is a 901-amino-acid chain: Protein translocase subunit SecA (901 aa).

ATP-binding positions include glutamine 87, 105–109 (GEGKT), and aspartate 512. The tract at residues 859-901 (HQDDDSAAAAALAAQTGERKVGRNDPCPCGSGKKYKQCHGRLQ) is disordered. Zn(2+) is bound by residues cysteine 885, cysteine 887, cysteine 896, and histidine 897. Residues 891-901 (KKYKQCHGRLQ) are compositionally biased toward basic residues.

This sequence belongs to the SecA family. As to quaternary structure, monomer and homodimer. Part of the essential Sec protein translocation apparatus which comprises SecA, SecYEG and auxiliary proteins SecDF-YajC and YidC. It depends on Zn(2+) as a cofactor.

Its subcellular location is the cell inner membrane. The protein resides in the cytoplasm. The catalysed reaction is ATP + H2O + cellular proteinSide 1 = ADP + phosphate + cellular proteinSide 2.. Its function is as follows. Part of the Sec protein translocase complex. Interacts with the SecYEG preprotein conducting channel. Has a central role in coupling the hydrolysis of ATP to the transfer of proteins into and across the cell membrane, serving both as a receptor for the preprotein-SecB complex and as an ATP-driven molecular motor driving the stepwise translocation of polypeptide chains across the membrane. The protein is Protein translocase subunit SecA of Escherichia coli O6:K15:H31 (strain 536 / UPEC).